The following is a 25-amino-acid chain: Small ribosomal subunit protein eS32 (25 aa).

Positions 1-25 (MRAKWRKKRMRRLKRKRRKMRQRSK) are disordered.

Belongs to the eukaryotic ribosomal protein eS32 family. In terms of assembly, component of the large ribosomal subunit.

The protein resides in the cytoplasm. In terms of biological role, component of the small ribosomal subunit. The ribosome is a large ribonucleoprotein complex responsible for the synthesis of proteins in the cell. This chain is Small ribosomal subunit protein eS32 (rpl41), found in Cyprinus carpio (Common carp).